Consider the following 838-residue polypeptide: Rho GTPase-activating protein 12 (838 aa).

The SH3 domain occupies 10–72 (AGQAYIEVEY…PAQYVKEVTR (63 aa)). Polar residues-rich tracts occupy residues 155–172 (GKFNSDSHSPKVSSQNRT) and 189–198 (TSFSQEQSCD). Residues 155–239 (GKFNSDSHSP…PPNQGRPDSP (85 aa)) form a disordered region. S163 bears the Phosphoserine mark. Phosphoserine occurs at positions 199, 211, and 213. Residues T228 and T229 each carry the phosphothreonine modification. A Phosphoserine modification is found at S238. The residue at position 241 (Y241) is a Phosphotyrosine. The WW 1 domain occupies 263 to 296 (IQVNGEWETHKDSSGRCYYYNRTTQERTWKPPRW). A compositionally biased stretch (basic and acidic residues) spans 291 to 302 (WKPPRWARDVST). The interval 291–346 (WKPPRWARDVSTSRDFQSPGEQEPLSSEENYHSSCFSQSDSQCGSPPRGWSEELDE) is disordered. Residues 303–334 (SRDFQSPGEQEPLSSEENYHSSCFSQSDSQCG) show a composition bias toward polar residues. The WW 2 domain occupies 355 to 388 (DYTKEKWLKHVDDQGRQYYYSADGSRSEWELPKY). The tract at residues 425–456 (DSNDKDSPTTTKLCLPENESPPTSSKHQDPGQ) is disordered. The 102-residue stretch at 466-567 (KITENGKKVR…WFKVLSSTIN (102 aa)) folds into the PH domain. Positions 572-582 (EADEAAEEETP) are enriched in acidic residues. The segment at 572–620 (EADEAAEEETPDSPGVEKHDKEKDQKELKKLRSMKGSSMDSSEQKKTKK) is disordered. Phosphoserine is present on S584. The span at 586-601 (GVEKHDKEKDQKELKK) shows a compositional bias: basic and acidic residues. The Rho-GAP domain occupies 648–836 (SNLANLCQRE…LILLELSTVF (189 aa)).

In terms of biological role, GTPase activator for the Rho-type GTPases by converting them to an inactive GDP-bound state. The chain is Rho GTPase-activating protein 12 (Arhgap12) from Mus musculus (Mouse).